The following is a 224-amino-acid chain: ATP-dependent dethiobiotin synthetase BioD (224 aa).

14–19 (GIGKTV) is a binding site for ATP. A Mg(2+)-binding site is contributed by Thr-18. Lys-39 is a catalytic residue. Ser-43 contributes to the substrate binding site. Residues Asp-56, 117-120 (EGVG), and 177-178 (NE) contribute to the ATP site. Asp-56 and Glu-117 together coordinate Mg(2+).

Belongs to the dethiobiotin synthetase family. As to quaternary structure, homodimer. The cofactor is Mg(2+).

It localises to the cytoplasm. The enzyme catalyses (7R,8S)-7,8-diammoniononanoate + CO2 + ATP = (4R,5S)-dethiobiotin + ADP + phosphate + 3 H(+). It participates in cofactor biosynthesis; biotin biosynthesis; biotin from 7,8-diaminononanoate: step 1/2. Catalyzes a mechanistically unusual reaction, the ATP-dependent insertion of CO2 between the N7 and N8 nitrogen atoms of 7,8-diaminopelargonic acid (DAPA, also called 7,8-diammoniononanoate) to form a ureido ring. The chain is ATP-dependent dethiobiotin synthetase BioD from Xanthomonas campestris pv. campestris (strain B100).